The sequence spans 537 residues: MNPSTAQATAVVDELVRGGVREVVLCPGSRNAPLAFALQAADLDGRLRLHMRIDERTAGFLALGLAIAGKRPVPIVMTSGTAVANLGPAVLEANYARVPLVVLSANRPYEMLGTGANQTVEQLGLFGSQVRATISLGLAEDDSTQNSQWRSAVCRVLAAARGTRSGNAGPVHFDIPLREPLVPDVHVHGPVPEGRPGGAAWTTTQNATLDVPVDLDLTADTVVISGHGSALRPELAGLPTVAEPTAPMHGIALHPLALSQLKPKQAIITGRPTLHRQVSKVLADPSVDVYALTTGPRWPDVSGNVLATGTRAVVTGTPDPAWIARCAALTEHAETAVRKQLDAHPKATGLHVAAAVMDALADGDQLLLGASNPVRDAALVSYPKPAVRVLSNRGVAGIDGTVSAAVGAALAYEGGRTVALMGDLTFLHDASGLLIGTGEPRPSDLTIVVANDDGGGIFELLEQGDPQYAGVFERVFGTPHGMDLAALCAAYRVPHAAVTVDALATTLAQPANGIRVLEVATDRSGLRELHASVRAQL.

It belongs to the TPP enzyme family. MenD subfamily. In terms of assembly, homodimer. Mg(2+) serves as cofactor. It depends on Mn(2+) as a cofactor. Requires thiamine diphosphate as cofactor.

It carries out the reaction isochorismate + 2-oxoglutarate + H(+) = 5-enolpyruvoyl-6-hydroxy-2-succinyl-cyclohex-3-ene-1-carboxylate + CO2. The protein operates within quinol/quinone metabolism; 1,4-dihydroxy-2-naphthoate biosynthesis; 1,4-dihydroxy-2-naphthoate from chorismate: step 2/7. It participates in quinol/quinone metabolism; menaquinone biosynthesis. Catalyzes the thiamine diphosphate-dependent decarboxylation of 2-oxoglutarate and the subsequent addition of the resulting succinic semialdehyde-thiamine pyrophosphate anion to isochorismate to yield 2-succinyl-5-enolpyruvyl-6-hydroxy-3-cyclohexene-1-carboxylate (SEPHCHC). The polypeptide is 2-succinyl-5-enolpyruvyl-6-hydroxy-3-cyclohexene-1-carboxylate synthase (Rhodococcus erythropolis (strain PR4 / NBRC 100887)).